Consider the following 288-residue polypeptide: ATP synthase gamma chain (288 aa).

It belongs to the ATPase gamma chain family. In terms of assembly, F-type ATPases have 2 components, CF(1) - the catalytic core - and CF(0) - the membrane proton channel. CF(1) has five subunits: alpha(3), beta(3), gamma(1), delta(1), epsilon(1). CF(0) has three main subunits: a, b and c.

It is found in the cell inner membrane. Functionally, produces ATP from ADP in the presence of a proton gradient across the membrane. The gamma chain is believed to be important in regulating ATPase activity and the flow of protons through the CF(0) complex. The polypeptide is ATP synthase gamma chain (Rickettsia canadensis (strain McKiel)).